We begin with the raw amino-acid sequence, 245 residues long: 1-(5-phosphoribosyl)-5-[(5-phosphoribosylamino)methylideneamino] imidazole-4-carboxamide isomerase (245 aa).

The Proton acceptor role is filled by D7. Catalysis depends on D129, which acts as the Proton donor.

It belongs to the HisA/HisF family.

The protein resides in the cytoplasm. The catalysed reaction is 1-(5-phospho-beta-D-ribosyl)-5-[(5-phospho-beta-D-ribosylamino)methylideneamino]imidazole-4-carboxamide = 5-[(5-phospho-1-deoxy-D-ribulos-1-ylimino)methylamino]-1-(5-phospho-beta-D-ribosyl)imidazole-4-carboxamide. The protein operates within amino-acid biosynthesis; L-histidine biosynthesis; L-histidine from 5-phospho-alpha-D-ribose 1-diphosphate: step 4/9. The chain is 1-(5-phosphoribosyl)-5-[(5-phosphoribosylamino)methylideneamino] imidazole-4-carboxamide isomerase from Salmonella agona (strain SL483).